The primary structure comprises 204 residues: Abscisic acid receptor PYL3 (204 aa).

The segment at 40-191 (HEPRDHQCSS…NLKSLAEVSE (152 aa)) is START-like. The cysteines at positions 47 and 172 are disulfide-linked. Abscisate contacts are provided by residues Lys76, 104–109 (ATRSTE), 131–137 (RLKNYSS), and Glu156. Residues 100 to 104 (SGLPA) carry the Gate loop motif. The short motif at 130–132 (HRL) is the Latch loop element.

This sequence belongs to the PYR/PYL/RCAR abscisic acid intracellular receptor family. In terms of assembly, monomer. Interacts with PP2C50. Binding to PP2C50 is dependent on the presence of abscisic acid (ABA). Interacts with PP2C30 and PP2C53.

The protein localises to the cytoplasm. Its subcellular location is the cytosol. It localises to the nucleus. In terms of biological role, involved in abscisic acid (ABA) signaling during seed germination and abiotic stress response. Acts as a positive regulator of ABA-mediated inhibition of seed germination, and tolerance to drought and cold stresses. Together with PP2C50 and SAPK10, may form an ABA signaling module involved in stress response. Inhibits the protein phosphatases PP2C06 and PP2C09 when activated by abscisic acid (ABA). This Oryza sativa subsp. japonica (Rice) protein is Abscisic acid receptor PYL3.